Reading from the N-terminus, the 117-residue chain is Hydrogenase maturation factor HypA (117 aa).

His-2 serves as a coordination point for Ni(2+). Zn(2+) is bound by residues Cys-73, Cys-76, Cys-92, and Cys-95.

It belongs to the HypA/HybF family.

Its function is as follows. Involved in the maturation of [NiFe] hydrogenases. Required for nickel insertion into the metal center of the hydrogenase. The protein is Hydrogenase maturation factor HypA of Solidesulfovibrio magneticus (strain ATCC 700980 / DSM 13731 / RS-1) (Desulfovibrio magneticus).